A 924-amino-acid chain; its full sequence is DNA polymerase (924 aa).

Residues 235-386 (YPMSQQPKIV…DDCDVTFRLS (152 aa)) form the 3'-5' exonuclease domain.

The protein belongs to the DNA polymerase type-A family.

It carries out the reaction DNA(n) + a 2'-deoxyribonucleoside 5'-triphosphate = DNA(n+1) + diphosphate. Its function is as follows. Replicates viral genomic DNA. This polymerase possesses two enzymatic activities: DNA synthesis (polymerase) and an exonucleolytic activity that degrades single-stranded DNA in the 3'-5' direction. The protein is DNA polymerase (31) of Bacillus phage SP01 (Bacteriophage SP01).